The primary structure comprises 76 residues: Large ribosomal subunit protein uL29 (76 aa).

The protein belongs to the universal ribosomal protein uL29 family.

This Corynebacterium kroppenstedtii (strain DSM 44385 / JCM 11950 / CIP 105744 / CCUG 35717) protein is Large ribosomal subunit protein uL29.